A 130-amino-acid chain; its full sequence is Calcitonin gene-related peptide 2 (130 aa).

The signal sequence occupies residues 1 to 26 (MDFWKFFPFLALSTIWVLCLASSLQA). The propeptide occupies 27 to 82 (APFRSALESSLDLGTLGDQEKHLLLAALMQDYEQMKARKLEQEEQETKGSRVTAQK). An intrachain disulfide couples Cys85 to Cys90. Phe120 carries the phenylalanine amide modification. Positions 127-130 (DLQA) are excised as a propeptide.

It belongs to the calcitonin family. Detected in nerve cells of cerebrum, hippocampus and pons/midbrain in newborns, and only in nerve cells of pons/midbrain in adult.

Its subcellular location is the secreted. In terms of biological role, CALCB/CGRP2 is a peptide hormone that induces vasodilation mediated by the CALCRL-RAMP1 receptor complex. Dilates a variety of vessels including the coronary, cerebral and systemic vasculature. Its abundance in the CNS also points toward a neurotransmitter or neuromodulator role. In Mus musculus (Mouse), this protein is Calcitonin gene-related peptide 2.